Here is a 339-residue protein sequence, read N- to C-terminus: Homeobox protein DBX2 (339 aa).

Residues 186–245 (GILRRAVFSEDQRKALEKMFQKQKYISKTDRKKLAINLGLKESQVKIWFQNRRMKWRNSK) constitute a DNA-binding region (homeobox). The tract at residues 282 to 318 (VPQQHSSPRWRENSPEPSERLIQESSGAPPPEANSLQ) is disordered. Basic and acidic residues predominate over residues 290–303 (RWRENSPEPSERLI).

Belongs to the H2.0 homeobox family.

It is found in the nucleus. The polypeptide is Homeobox protein DBX2 (DBX2) (Homo sapiens (Human)).